The sequence spans 883 residues: Brevican core protein (883 aa).

A signal peptide spans 1-22 (MIPLLLSLLAALVLTQAPAALA). Residues 35–154 (FRVRIGAAQL…SSDAVEVKVK (120 aa)) enclose the Ig-like V-type domain. Cystine bridges form between cysteine 56-cysteine 136, cysteine 178-cysteine 249, cysteine 202-cysteine 223, cysteine 276-cysteine 351, and cysteine 300-cysteine 321. N-linked (GlcNAc...) asparagine glycosylation occurs at asparagine 129. 2 Link domains span residues 156-251 (VVFL…YCYA) and 256-353 (GELF…YCFR). N-linked (GlcNAc...) asparagine glycosylation occurs at asparagine 336. Positions 389–574 (QEAVESESRG…EDGPSLLPET (186 aa)) are disordered. At serine 413 the chain carries Phosphoserine. The O-linked (Xyl...) (chondroitin sulfate) serine glycan is linked to serine 413. Residues 428–440 (ESETQSVAPPTGS) are compositionally biased toward polar residues. The segment covering 441 to 451 (SEEEGEALEEE) has biased composition (acidic residues). The span at 452 to 467 (ERFKDTETPKEEKEQE) shows a compositional bias: basic and acidic residues. A lipid anchor (GPI-anchor amidated serine) is attached at serine 622. One can recognise an EGF-like domain in the interval 622 to 658 (SSGDCIPSPCHNGGTCLEEKEGFRCLCVPGYGGDLCD). 7 disulfide bridges follow: cysteine 626-cysteine 637, cysteine 631-cysteine 646, cysteine 648-cysteine 657, cysteine 692-cysteine 784, cysteine 760-cysteine 776, cysteine 791-cysteine 834, and cysteine 820-cysteine 847. Residues 658–786 (DVGLHFCSPG…NYHLSYTCKM (129 aa)) form the C-type lectin domain. The region spanning 789–849 (VSCGPPPQLP…WEAPQISCVP (61 aa)) is the Sushi domain. A disordered region spans residues 859–883 (MTAPEGPRGQLPRQRKALLTPPSSL).

This sequence belongs to the aggrecan/versican proteoglycan family. In terms of assembly, interacts with TNR. Post-translationally, O-glycosylated; contains chondroitin sulfate. As to expression, brain.

It is found in the secreted. The protein resides in the extracellular space. The protein localises to the extracellular matrix. Its subcellular location is the membrane. Its function is as follows. May play a role in the terminally differentiating and the adult nervous system during postnatal development. Could stabilize interactions between hyaluronan (HA) and brain proteoglycans. Isoform 2 may function as a chondroitin sulfate-bearing cell surface receptor. The sequence is that of Brevican core protein (Bcan) from Rattus norvegicus (Rat).